The primary structure comprises 751 residues: Photosystem I P700 chlorophyll a apoprotein A1 (751 aa).

8 consecutive transmembrane segments (helical) span residues Ile-73–Ala-96, Leu-159–His-182, Met-198–Leu-222, Thr-294–Tyr-312, Trp-349–Tyr-372, Leu-388–Val-414, Ala-435–His-457, and Phe-532–Val-550. Residues Cys-574 and Cys-583 each contribute to the [4Fe-4S] cluster site. Transmembrane regions (helical) follow at residues His-590 to Trp-611 and Leu-665 to Phe-687. His-676 is a binding site for chlorophyll a'. Residues Met-684 and Tyr-692 each contribute to the chlorophyll a site. Trp-693 is a phylloquinone binding site. A helical transmembrane segment spans residues Ala-725–Ala-745.

The protein belongs to the PsaA/PsaB family. The PsaA/B heterodimer binds the P700 chlorophyll special pair and subsequent electron acceptors. PSI consists of a core antenna complex that captures photons, and an electron transfer chain that converts photonic excitation into a charge separation. The eukaryotic PSI reaction center is composed of at least 11 subunits. The cofactor is P700 is a chlorophyll a/chlorophyll a' dimer, A0 is one or more chlorophyll a, A1 is one or both phylloquinones and FX is a shared 4Fe-4S iron-sulfur center..

Its subcellular location is the plastid. It is found in the chloroplast thylakoid membrane. The catalysed reaction is reduced [plastocyanin] + hnu + oxidized [2Fe-2S]-[ferredoxin] = oxidized [plastocyanin] + reduced [2Fe-2S]-[ferredoxin]. Functionally, psaA and PsaB bind P700, the primary electron donor of photosystem I (PSI), as well as the electron acceptors A0, A1 and FX. PSI is a plastocyanin/cytochrome c6-ferredoxin oxidoreductase, converting photonic excitation into a charge separation, which transfers an electron from the donor P700 chlorophyll pair to the spectroscopically characterized acceptors A0, A1, FX, FA and FB in turn. Oxidized P700 is reduced on the lumenal side of the thylakoid membrane by plastocyanin or cytochrome c6. The sequence is that of Photosystem I P700 chlorophyll a apoprotein A1 from Pyropia yezoensis (Susabi-nori).